A 378-amino-acid chain; its full sequence is Cytochrome b (378 aa).

The next 4 helical transmembrane spans lie at 33 to 53, 77 to 98, 113 to 133, and 178 to 198; these read SGSL…FLSM, WLIR…YFHI, XNVG…GYVL, and FFAF…IHLI. Positions 83 and 97 each coordinate heme b. Residue H196 participates in heme b binding. An a ubiquinone-binding site is contributed by H201. The next 4 membrane-spanning stretches (helical) occupy residues 226–246, 288–308, 320–340, and 347–367; these read FKDL…ALFS, LGGV…PILH, LTQF…WIGG, and FIII…VLFP.

Belongs to the cytochrome b family. The cytochrome bc1 complex contains 3 respiratory subunits (MT-CYB, CYC1 and UQCRFS1), 2 core proteins (UQCRC1 and UQCRC2) and probably 6 low-molecular weight proteins. It depends on heme b as a cofactor.

The protein resides in the mitochondrion inner membrane. Functionally, component of the ubiquinol-cytochrome c reductase complex (complex III or cytochrome b-c1 complex) that is part of the mitochondrial respiratory chain. The b-c1 complex mediates electron transfer from ubiquinol to cytochrome c. Contributes to the generation of a proton gradient across the mitochondrial membrane that is then used for ATP synthesis. In Nannacara anomala (Goldeneye cichlid), this protein is Cytochrome b (mt-cyb).